A 380-amino-acid chain; its full sequence is Cytochrome b (380 aa).

A run of 4 helical transmembrane segments spans residues 34-54 (FGSL…ILAM), 78-100 (WLMR…AHMG), 113-133 (TWNI…MGYV), and 179-199 (FFAF…VHLL). Heme b contacts are provided by histidine 84 and histidine 98. Positions 183 and 197 each coordinate heme b. Position 202 (histidine 202) interacts with a ubiquinone. 4 helical membrane passes run 225–245 (FSWK…TITL), 289–309 (LGGV…MLTH), 324–344 (VIFW…AAPV), and 349–369 (ITLG…APMI).

The protein belongs to the cytochrome b family. The main subunits of complex b-c1 are: cytochrome b, cytochrome c1 and the Rieske protein. Heme b serves as cofactor.

The protein localises to the mitochondrion inner membrane. In terms of biological role, component of the ubiquinol-cytochrome c reductase complex (complex III or cytochrome b-c1 complex) that is part of the mitochondrial respiratory chain. The b-c1 complex mediates electron transfer from ubiquinol to cytochrome c. Contributes to the generation of a proton gradient across the mitochondrial membrane that is then used for ATP synthesis. The protein is Cytochrome b (mt:Cyt-b) of Xenoturbella bocki (Marine worm).